The chain runs to 137 residues: Small heat shock protein IbpA (137 aa).

Residues 28–137 enclose the sHSP domain; sequence SQSNGGYPPY…AKKPRRIEIN (110 aa).

Belongs to the small heat shock protein (HSP20) family. Monomer. Forms homomultimers of about 100-150 subunits at optimal growth temperatures. Conformation changes to monomers at high temperatures or high ionic concentrations.

The protein resides in the cytoplasm. Its function is as follows. Associates with aggregated proteins, together with IbpB, to stabilize and protect them from irreversible denaturation and extensive proteolysis during heat shock and oxidative stress. Aggregated proteins bound to the IbpAB complex are more efficiently refolded and reactivated by the ATP-dependent chaperone systems ClpB and DnaK/DnaJ/GrpE. Its activity is ATP-independent. This is Small heat shock protein IbpA from Shigella sonnei (strain Ss046).